The primary structure comprises 266 residues: Interleukin-1 beta (266 aa).

Residues 1–113 constitute a propeptide that is removed on maturation; sequence MATVPEPTNE…ETYDDDLLCD (113 aa).

This sequence belongs to the IL-1 family. Monomer. In its precursor form, weakly interacts with full-length MEFV; the mature cytokine does not interact at all. Interacts with integrins ITGAV:ITGBV and ITGA5:ITGB1; integrin-binding is required for IL1B signaling. Interacts with cargo receptor TMED10; the interaction is direct and is required for the secretion of IL1B mature form. Interacts with HSP90AB1; the interaction facilitates cargo translocation into the ERGIC. Interacts with HSP90B1; the interaction facilitates cargo translocation into the ERGIC.

It localises to the cytoplasm. The protein localises to the cytosol. The protein resides in the secreted. Its subcellular location is the lysosome. It is found in the extracellular exosome. In terms of biological role, potent pro-inflammatory cytokine. Initially discovered as the major endogenous pyrogen, induces prostaglandin synthesis, neutrophil influx and activation, T-cell activation and cytokine production, B-cell activation and antibody production, and fibroblast proliferation and collagen production. Promotes Th17 differentiation of T-cells. Synergizes with IL12/interleukin-12 to induce IFNG synthesis from T-helper 1 (Th1) cells. Plays a role in angiogenesis by inducing VEGF production synergistically with TNF and IL6. Involved in transduction of inflammation downstream of pyroptosis: its mature form is specifically released in the extracellular milieu by passing through the gasdermin-D (GSDMD) pore. The protein is Interleukin-1 beta (IL1B) of Delphinapterus leucas (Beluga whale).